The following is a 187-amino-acid chain: Pyridoxal 5'-phosphate synthase subunit PdxT (187 aa).

47-49 (GES) serves as a coordination point for L-glutamine. C76 acts as the Nucleophile in catalysis. Residues R102 and 128–129 (IR) contribute to the L-glutamine site. Residues H165 and E167 each act as charge relay system in the active site.

This sequence belongs to the glutaminase PdxT/SNO family. As to quaternary structure, in the presence of PdxS, forms a dodecamer of heterodimers. Only shows activity in the heterodimer.

The enzyme catalyses aldehydo-D-ribose 5-phosphate + D-glyceraldehyde 3-phosphate + L-glutamine = pyridoxal 5'-phosphate + L-glutamate + phosphate + 3 H2O + H(+). It carries out the reaction L-glutamine + H2O = L-glutamate + NH4(+). Its pathway is cofactor biosynthesis; pyridoxal 5'-phosphate biosynthesis. Catalyzes the hydrolysis of glutamine to glutamate and ammonia as part of the biosynthesis of pyridoxal 5'-phosphate. The resulting ammonia molecule is channeled to the active site of PdxS. In Methanococcus maripaludis (strain C7 / ATCC BAA-1331), this protein is Pyridoxal 5'-phosphate synthase subunit PdxT.